Reading from the N-terminus, the 96-residue chain is Conantokin-E (96 aa).

Residues 1–24 form the signal peptide; the sequence is LLVPLVTFHLILGMGTLDHGGALT. A propeptide spanning residues 25–72 is cleaved from the precursor; the sequence is ERRSADATALKPEPVLLQKSDARSTDDNDKDRLTQMKRILKKRGNKAR. Positions 28 to 57 are disordered; that stretch reads SADATALKPEPVLLQKSDARSTDDNDKDRL. The span at 44–57 shows a compositional bias: basic and acidic residues; it reads SDARSTDDNDKDRL. 5 positions are modified to 4-carboxyglutamate: Glu75, Glu76, Glu82, Glu86, and Glu95. Residues Glu82 and Glu86 each coordinate a divalent metal cation. Cys83 and Cys96 are disulfide-bonded.

It belongs to the conotoxin B superfamily. Expressed by the venom duct.

It localises to the secreted. Functionally, conantokins inhibit N-methyl-D-aspartate (NMDA) receptors. This toxin has the highest potency for the NR2B/GRIN2B subunit, followed by NR2A/GRIN2A, NR2C/GRIN2C, and NR2D/GRIN2D subunits. In Conus ermineus (Agate cone), this protein is Conantokin-E.